An 842-amino-acid polypeptide reads, in one-letter code: MVKKFTSKIKAAVFAAVVAATAIFGPAISSQAVTSVPYKWDNVVIGGGGGFMPGIVFNETEKDLIYARADIGGAYRWDPSTETWIPLLDHFQMDEYSYYGVESIATDPVDPNRVYIAAGMYTNDWLPNMGAILRSTDRGETWEKTILPFKMGGNMPGRSMGERLAIDPNDNRILYLGTRCGNGLWRSTDYGVTWSKVESFPNPGTYIYDPNFDYTKDIIGVVWVVFDKSSSTPGNPTKTIYVGVADKNESIYRSTDGGVTWKAVPGQPKGLLPHHGVLASNGMLYITYGDTCGPYDGNGKGQVWKFNTRTGEWIDITPIPYSSSDNRFCFAGLAVDRQNPDIIMVTSMNAWWPDEYIFRSTDGGATWKNIWEWGMYPERILHYEIDISAAPWLDWGTEKQLPEINPKLGWMIGDIEIDPFNSDRMMYVTGATIYGCDNLTDWDRGGKVKIEVKATGIEECAVLDLVSPPEGAPLVSAVGDLVGFVHDDLKVGPKKMHVPSYSSGTGIDYAELVPNFMALVAKADLYDVKKISFSYDGGRNWFQPPNEAPNSVGGGSVAVAADAKSVIWTPENASPAVTTDNGNSWKVCTNLGMGAVVASDRVNGKKFYAFYNGKFYISTDGGLTFTDTKAPQLPKSVNKIKAVPGKEGHVWLAAREGGLWRSTDGGYTFEKLSNVDTAHVVGFGKAAPGQDYMAIYITGKIDNVLGFFRSDDAGKTWVRINDDEHGYGAVDTAITGDPRVYGRVYIATNGRGIVYGEPASDEPVPTPPQVDKGLVGDLNGDNRINSTDLTLMKRYILKSIEDLPVEDDLWAADINGDGKINSTDYTYLKKYLLQAIPELPKK.

Residues 1-32 (MVKKFTSKIKAAVFAAVVAATAIFGPAISSQA) form the signal peptide. The active-site Nucleophile is Asp-70. BNR repeat units follow at residues 134–144 (RSTDRGETWEK), 185–196 (WRSTDYGVTWSK), 252–262 (YRSTDGGVTWK), and 358–368 (FRSTDGGATWK). Asp-480 (proton donor) is an active-site residue. 5 BNR repeats span residues 533–541 (FSYDGGRNW), 577–586 (VTTDNGNSWK), 616–626 (YISTDGGLTFT), 660–671 (WRSTDGGYTFEK), and 708–718 (FRSDDAGKTWV). One can recognise a Dockerin domain in the interval 771-841 (DKGLVGDLNG…LLQAIPELPK (71 aa)).

It belongs to the glycosyl hydrolase 74 family.

In terms of biological role, hydrolyzes the glucosidic bonds of unbranched Glc residues in tamarind seed xyloglucan, producing XXXG, XLXG, XXLG and XLLG. Has low activity on carboxymethylcellulose, lichenan,hydroxyethylcellulose and glucuronoxylan, and no activity on xylan, polygalaturonic acid, wheat arabinoxylan, rhamnogalacturan, curdlan, laminarin, galactomannan, galactan, arabinan and pachyman or amorphous cellulose. The chain is Xyloglucanase Xgh74A from Acetivibrio thermocellus (strain ATCC 27405 / DSM 1237 / JCM 9322 / NBRC 103400 / NCIMB 10682 / NRRL B-4536 / VPI 7372) (Clostridium thermocellum).